A 273-amino-acid polypeptide reads, in one-letter code: Formamidopyrimidine-DNA glycosylase (273 aa).

Pro2 serves as the catalytic Schiff-base intermediate with DNA. Residue Glu3 is the Proton donor of the active site. Lys57 (proton donor; for beta-elimination activity) is an active-site residue. Residues His91, Arg110, and Lys151 each contribute to the DNA site. An FPG-type zinc finger spans residues 236–270 (QVYGRKDEACNDCGTIIEAKVIGQRNSYFCPHCQM). Arg260 functions as the Proton donor; for delta-elimination activity in the catalytic mechanism.

The protein belongs to the FPG family. As to quaternary structure, monomer. Zn(2+) serves as cofactor.

It catalyses the reaction Hydrolysis of DNA containing ring-opened 7-methylguanine residues, releasing 2,6-diamino-4-hydroxy-5-(N-methyl)formamidopyrimidine.. It carries out the reaction 2'-deoxyribonucleotide-(2'-deoxyribose 5'-phosphate)-2'-deoxyribonucleotide-DNA = a 3'-end 2'-deoxyribonucleotide-(2,3-dehydro-2,3-deoxyribose 5'-phosphate)-DNA + a 5'-end 5'-phospho-2'-deoxyribonucleoside-DNA + H(+). Its function is as follows. Involved in base excision repair of DNA damaged by oxidation or by mutagenic agents. Acts as a DNA glycosylase that recognizes and removes damaged bases. Has a preference for oxidized purines, such as 7,8-dihydro-8-oxoguanine (8-oxoG). Has AP (apurinic/apyrimidinic) lyase activity and introduces nicks in the DNA strand. Cleaves the DNA backbone by beta-delta elimination to generate a single-strand break at the site of the removed base with both 3'- and 5'-phosphates. This Actinobacillus pleuropneumoniae serotype 3 (strain JL03) protein is Formamidopyrimidine-DNA glycosylase.